The following is a 301-amino-acid chain: Probable splicing factor ECU05_1440 (301 aa).

Residues Met-1–Gly-70 enclose the RRM 1 domain. 2 disordered regions span residues Pro-106–Met-140 and Ser-255–Asp-301. Composition is skewed to basic and acidic residues over residues Tyr-110–Met-140 and Ser-255–Ser-270. The RRM 2 domain maps to Leu-182–Ser-255.

Belongs to the splicing factor SR family.

It localises to the nucleus. In terms of biological role, plays a role in splicing. The sequence is that of Probable splicing factor ECU05_1440 from Encephalitozoon cuniculi (strain GB-M1) (Microsporidian parasite).